A 222-amino-acid chain; its full sequence is Large ribosomal subunit protein uL1 (222 aa).

The protein belongs to the universal ribosomal protein uL1 family. Part of the 50S ribosomal subunit.

Its function is as follows. Binds directly to 23S rRNA. Probably involved in E site tRNA release. Functionally, protein L1 is also a translational repressor protein, it controls the translation of its operon by binding to its mRNA. This is Large ribosomal subunit protein uL1 from Pyrobaculum calidifontis (strain DSM 21063 / JCM 11548 / VA1).